Reading from the N-terminus, the 481-residue chain is Cysteine--tRNA ligase (481 aa).

Position 29 (cysteine 29) interacts with Zn(2+). Residues valine 31–histidine 41 carry the 'HIGH' region motif. Positions 209, 234, and 238 each coordinate Zn(2+). Residues lysine 266–serine 270 carry the 'KMSKS' region motif. Position 269 (lysine 269) interacts with ATP.

It belongs to the class-I aminoacyl-tRNA synthetase family. Monomer. Requires Zn(2+) as cofactor.

Its subcellular location is the cytoplasm. It catalyses the reaction tRNA(Cys) + L-cysteine + ATP = L-cysteinyl-tRNA(Cys) + AMP + diphosphate. The polypeptide is Cysteine--tRNA ligase (Syntrophotalea carbinolica (strain DSM 2380 / NBRC 103641 / GraBd1) (Pelobacter carbinolicus)).